The sequence spans 346 residues: Immunoglobulin heavy constant alpha (346 aa).

3 consecutive Ig-like domains span residues 6-96, 118-212, and 221-323; these read PSIF…KSVD, PRLS…VSIT, and PQVH…KSID. C26 and C83 form a disulfide bridge. The N-linked (GlcNAc...) (complex) asparagine glycan is linked to N134. Disulfide bonds link C139/C196 and C243/C306. N-linked (GlcNAc...) (complex) asparagine glycosylation occurs at N333.

As to quaternary structure, immunoglobulins are composed of two identical heavy chains and two identical light chains; disulfide-linked. Monomeric or polymeric. Part of the secretory IgA (sIgA) complex that consists of two, four or five IgA monomers, and two additional non-Ig polypeptides, namely the JCHAIN and the secretory component (the proteolytic product of PIGR). N-glycosylated. N-glycans attached to Asn-134 varies from differentially fucosylated complex and hybrid to sialylated with N-glycoyl neuraminic acid types: GlcNAc2Man3GlcNAc2(Fuc); GlcNAc1Man4GlcNAc2(Fuc); GlcNAc1Man4GlcNAc2; Gal1GlcNAc2Man3GlcNAc2(Fuc); GlcNAc2Man3GlcNAc2; Gal1GlcNAc2Man3GlcNAc2; GlcNAc1Man3GlcNAc2; GlcNAc1Man2GlcNAc2 and NeuGc1Gal1GlcNAc2Man3GlcNAc2(Fuc). N-glycans attached to Asn-333 are mainly fucosylated complex types: GlcNAc2Man3GlcNAc2; GlcNAc1Man3GlcNAc2; GlcNAc1Man3GlcNAc2(Fuc); GlcNAc2Man3GlcNAc2(Fuc); Gal1GlcNAc2Man3GlcNAc2(Fuc); NeuGc1Gal1GlcNAc1Man3GlcNAc2(Fuc); NeuGc1Gal1GlcNAc2Man3GlcNAc2(Fuc) and NeuAc1Gal1GlcNAc2Man3GlcNAc2(Fuc).

It localises to the secreted. The protein resides in the cell membrane. In terms of biological role, constant region of immunoglobulin heavy chains. Immunoglobulins, also known as antibodies, are membrane-bound or secreted glycoproteins produced by B lymphocytes. In the recognition phase of humoral immunity, the membrane-bound immunoglobulins serve as receptors which, upon binding of a specific antigen, trigger the clonal expansion and differentiation of B lymphocytes into immunoglobulins-secreting plasma cells. Secreted immunoglobulins mediate the effector phase of humoral immunity, which results in the elimination of bound antigens. The antigen binding site is formed by the variable domain of one heavy chain, together with that of its associated light chain. Thus, each immunoglobulin has two antigen binding sites with remarkable affinity for a particular antigen. The variable domains are assembled by a process called V-(D)-J rearrangement and can then be subjected to somatic hypermutations which, after exposure to antigen and selection, allow affinity maturation for a particular antigen. Ig alpha is the major immunoglobulin class in body secretions. The sequence is that of Immunoglobulin heavy constant alpha (IGHA) from Equus asinus (Donkey).